A 101-amino-acid chain; its full sequence is Small ribosomal subunit protein uS14 (101 aa).

This sequence belongs to the universal ribosomal protein uS14 family. Part of the 30S ribosomal subunit. Contacts proteins S3 and S10.

Binds 16S rRNA, required for the assembly of 30S particles and may also be responsible for determining the conformation of the 16S rRNA at the A site. This Chromohalobacter salexigens (strain ATCC BAA-138 / DSM 3043 / CIP 106854 / NCIMB 13768 / 1H11) protein is Small ribosomal subunit protein uS14.